The following is a 329-amino-acid chain: 7,8-didemethyl-8-hydroxy-5-deazariboflavin synthase (329 aa).

The Radical SAM core domain maps to 1–235; sequence MFIPVTNICR…SDVSVQVAPN (235 aa). [4Fe-4S] cluster-binding residues include Cys9, Cys13, and Cys16.

This sequence belongs to the radical SAM superfamily. CofG family. As to quaternary structure, consists of two subunits, CofG and CofH. It depends on [4Fe-4S] cluster as a cofactor.

It catalyses the reaction 5-amino-5-(4-hydroxybenzyl)-6-(D-ribitylimino)-5,6-dihydrouracil + S-adenosyl-L-methionine = 7,8-didemethyl-8-hydroxy-5-deazariboflavin + 5'-deoxyadenosine + L-methionine + NH4(+) + H(+). It participates in cofactor biosynthesis; coenzyme F0 biosynthesis. Functionally, catalyzes the radical-mediated synthesis of 7,8-didemethyl-8-hydroxy-5-deazariboflavin from 5-amino-5-(4-hydroxybenzyl)-6-(D-ribitylimino)-5,6-dihydrouracil. This chain is 7,8-didemethyl-8-hydroxy-5-deazariboflavin synthase, found in Methanosarcina acetivorans (strain ATCC 35395 / DSM 2834 / JCM 12185 / C2A).